The chain runs to 507 residues: RNA-splicing ligase RtcB homolog (507 aa).

The Mn(2+) site is built by D121, C124, H229, H261, and H355. Residue 228–232 (NHYAE) participates in GMP binding. Residues 355–356 (HN), 404–407 (GGTM), S411, 430–433 (HGAG), and K506 contribute to the GMP site. H430 functions as the GMP-histidine intermediate in the catalytic mechanism.

The protein belongs to the RtcB family. In terms of assembly, catalytic component of the tRNA-splicing ligase complex. It depends on Mn(2+) as a cofactor.

The catalysed reaction is a 3'-end 3'-phospho-ribonucleotide-RNA + a 5'-end dephospho-ribonucleoside-RNA + GTP = a ribonucleotidyl-ribonucleotide-RNA + GMP + diphosphate. The enzyme catalyses a 3'-end 2',3'-cyclophospho-ribonucleotide-RNA + a 5'-end dephospho-ribonucleoside-RNA + GTP + H2O = a ribonucleotidyl-ribonucleotide-RNA + GMP + diphosphate + H(+). Catalytic subunit of the tRNA-splicing ligase complex that acts by directly joining spliced tRNA halves to mature-sized tRNAs by incorporating the precursor-derived splice junction phosphate into the mature tRNA as a canonical 3',5'-phosphodiester. May act as an RNA ligase with broad substrate specificity, and may function toward other RNAs. In Plasmodium yoelii yoelii, this protein is RNA-splicing ligase RtcB homolog.